Consider the following 378-residue polypeptide: Ribosomal RNA large subunit methyltransferase G (378 aa).

The protein belongs to the methyltransferase superfamily. RlmG family.

The protein resides in the cytoplasm. It catalyses the reaction guanosine(1835) in 23S rRNA + S-adenosyl-L-methionine = N(2)-methylguanosine(1835) in 23S rRNA + S-adenosyl-L-homocysteine + H(+). Specifically methylates the guanine in position 1835 (m2G1835) of 23S rRNA. In Shigella flexneri serotype 5b (strain 8401), this protein is Ribosomal RNA large subunit methyltransferase G.